We begin with the raw amino-acid sequence, 185 residues long: UPF0397 protein CPF_1836 (185 aa).

The next 5 helical transmembrane spans lie at 11-31 (IVAIGIGSAVFMILGRFGSLP), 44-64 (AFLALMALLYGPLAGFLIGFI), 71-91 (IVFFGSPWISWVFASGIVGLI), 111-131 (IFMFNLIQIIANGVAWFLVAP), and 149-169 (GVIGGISNMVTVGVLGTILIA).

The protein belongs to the UPF0397 family.

It is found in the cell membrane. The polypeptide is UPF0397 protein CPF_1836 (Clostridium perfringens (strain ATCC 13124 / DSM 756 / JCM 1290 / NCIMB 6125 / NCTC 8237 / Type A)).